The following is a 560-amino-acid chain: Flagellar M-ring protein (560 aa).

The helical transmembrane segment at 26 to 46 (IPLIVAGSAAVAIVVAMVLWA) threads the bilayer. Residues 304-372 (VGAGYPGGVP…TSNYEVDRTI (69 aa)) are disordered. The span at 331–353 (PPTNQQNAQNTPQTSTSTNSNSA) shows a compositional bias: low complexity. Residues 354 to 366 (GPRSTQRNETSNY) are compositionally biased toward polar residues. A helical membrane pass occupies residues 455–475 (FIDQLLAAGRWLLVLVVAWIL).

Belongs to the FliF family. As to quaternary structure, the basal body constitutes a major portion of the flagellar organelle and consists of four rings (L,P,S, and M) mounted on a central rod. The M ring is integral to the inner membrane of the cell and may be connected to the flagellar rod via the S ring. The S (supramembrane ring) lies just distal to the M ring. The L and P rings lie in the outer membrane and the periplasmic space, respectively.

It localises to the cell inner membrane. The protein localises to the bacterial flagellum basal body. In terms of biological role, the M ring may be actively involved in energy transduction. The sequence is that of Flagellar M-ring protein (fliF) from Salmonella typhimurium (strain LT2 / SGSC1412 / ATCC 700720).